We begin with the raw amino-acid sequence, 418 residues long: Zinc finger protein 566 (418 aa).

The region spanning V6–P77 is the KRAB domain. The C2H2-type 1; degenerate zinc-finger motif lies at K169–H193. 7 consecutive C2H2-type zinc fingers follow at residues Y199 to H221, F227 to H249, Y255 to H277, Y283 to H305, Y311 to H333, Y339 to H361, and Y367 to H389. Glycyl lysine isopeptide (Lys-Gly) (interchain with G-Cter in SUMO2) cross-links involve residues K314 and K328.

The protein belongs to the krueppel C2H2-type zinc-finger protein family.

The protein resides in the nucleus. Functionally, may be involved in transcriptional regulation. The polypeptide is Zinc finger protein 566 (ZNF566) (Homo sapiens (Human)).